The sequence spans 600 residues: Cytidine monophosphate-N-acetylneuraminic acid hydroxylase (600 aa).

Residues Leu-9–Leu-107 form the Rieske domain. Positions 49, 51, 70, and 73 each coordinate [2Fe-2S] cluster.

Belongs to the CMP-Neu5Ac hydroxylase family. [2Fe-2S] cluster is required as a cofactor.

Its subcellular location is the cytoplasm. It carries out the reaction CMP-N-acetyl-beta-neuraminate + 2 Fe(II)-[cytochrome b5] + O2 + 2 H(+) = CMP-N-glycoloyl-beta-neuraminate + 2 Fe(III)-[cytochrome b5] + H2O. It participates in amino-sugar metabolism; N-acetylneuraminate metabolism. Its function is as follows. Sialic acids are components of carbohydrate chains of glycoconjugates and are involved in cell-cell recognition and cell-pathogen interactions. Catalyzes the conversion of CMP-N-acetylneuraminic acid (CMP-Neu5Ac) into its hydroxylated derivative CMP-N-glycolylneuraminic acid (CMP-Neu5Gc), a sialic acid abundantly expressed at the surface of many cells. The polypeptide is Cytidine monophosphate-N-acetylneuraminic acid hydroxylase (CMAH) (Pan paniscus (Pygmy chimpanzee)).